Reading from the N-terminus, the 402-residue chain is Putative polyketide beta-ketoacyl synthase 2 (402 aa).

2 disordered regions span residues 1–30 (MTPV…WAPR) and 188–222 (VEPR…FDRD). The Ketosynthase family 3 (KS3) domain occupies 1–400 (MTPVAVTGMG…GFNSALVVRA (400 aa)). Residues 192-205 (SAPGAGSPSSPAGG) show a composition bias toward low complexity.

It belongs to the thiolase-like superfamily. Beta-ketoacyl-ACP synthases family.

It functions in the pathway antifungal biosynthesis; monensin biosynthesis. This is Putative polyketide beta-ketoacyl synthase 2 from Streptomyces virginiae (Streptomyces cinnamonensis).